A 690-amino-acid polypeptide reads, in one-letter code: Elongation factor G (690 aa).

The region spanning 8–283 (SKCRNIGIMA…AVVDFLPAPN (276 aa)) is the tr-type G domain. GTP is bound by residues 17 to 24 (AHIDAGKT), 81 to 85 (DTPGH), and 135 to 138 (NKMD).

It belongs to the TRAFAC class translation factor GTPase superfamily. Classic translation factor GTPase family. EF-G/EF-2 subfamily.

Its subcellular location is the cytoplasm. Its function is as follows. Catalyzes the GTP-dependent ribosomal translocation step during translation elongation. During this step, the ribosome changes from the pre-translocational (PRE) to the post-translocational (POST) state as the newly formed A-site-bound peptidyl-tRNA and P-site-bound deacylated tRNA move to the P and E sites, respectively. Catalyzes the coordinated movement of the two tRNA molecules, the mRNA and conformational changes in the ribosome. The polypeptide is Elongation factor G (Ehrlichia canis (strain Jake)).